Reading from the N-terminus, the 300-residue chain is Acetaldehyde dehydrogenase 3 (300 aa).

NAD(+) is bound at residue 11 to 14; the sequence is SGNI. Cys-126 serves as the catalytic Acyl-thioester intermediate. Residues 157 to 165 and Asn-276 contribute to the NAD(+) site; that span reads SAGPGTRAN.

Belongs to the acetaldehyde dehydrogenase family.

It catalyses the reaction acetaldehyde + NAD(+) + CoA = acetyl-CoA + NADH + H(+). The chain is Acetaldehyde dehydrogenase 3 (hsaG) from Rhodococcus jostii (strain RHA1).